Consider the following 162-residue polypeptide: Cyclic pyranopterin monophosphate synthase (162 aa).

Substrate contacts are provided by residues 75 to 77 and 113 to 114; these read LCH and ME. D128 is a catalytic residue.

This sequence belongs to the MoaC family. Homohexamer; trimer of dimers.

It catalyses the reaction (8S)-3',8-cyclo-7,8-dihydroguanosine 5'-triphosphate = cyclic pyranopterin phosphate + diphosphate. It functions in the pathway cofactor biosynthesis; molybdopterin biosynthesis. Its function is as follows. Catalyzes the conversion of (8S)-3',8-cyclo-7,8-dihydroguanosine 5'-triphosphate to cyclic pyranopterin monophosphate (cPMP). The chain is Cyclic pyranopterin monophosphate synthase from Klebsiella pneumoniae subsp. pneumoniae (strain ATCC 700721 / MGH 78578).